The following is a 705-amino-acid chain: Polyribonucleotide nucleotidyltransferase (705 aa).

Residues Asp486 and Asp492 each coordinate Mg(2+). The KH domain occupies 553 to 612 (PRIYKIKINPEKIKDVIGKGGSVIRMLTEKTKSSIEIEDDGTVKVISTDIKNAQCALKKI). The region spanning 622 to 690 (NKIYVAKITR…RYGRIRLSFT (69 aa)) is the S1 motif domain.

Belongs to the polyribonucleotide nucleotidyltransferase family. As to quaternary structure, component of the RNA degradosome, which is a multiprotein complex involved in RNA processing and mRNA degradation. It depends on Mg(2+) as a cofactor.

It localises to the cytoplasm. The catalysed reaction is RNA(n+1) + phosphate = RNA(n) + a ribonucleoside 5'-diphosphate. Functionally, involved in mRNA degradation. Catalyzes the phosphorolysis of single-stranded polyribonucleotides processively in the 3'- to 5'-direction. The sequence is that of Polyribonucleotide nucleotidyltransferase from Wigglesworthia glossinidia brevipalpis.